The following is a 185-amino-acid chain: Protein GrpE (185 aa).

The interval 1 to 22 is disordered; the sequence is MTASQEPVDQAPESNEPAPAVP.

It belongs to the GrpE family. As to quaternary structure, homodimer.

The protein localises to the cytoplasm. Its function is as follows. Participates actively in the response to hyperosmotic and heat shock by preventing the aggregation of stress-denatured proteins, in association with DnaK and GrpE. It is the nucleotide exchange factor for DnaK and may function as a thermosensor. Unfolded proteins bind initially to DnaJ; upon interaction with the DnaJ-bound protein, DnaK hydrolyzes its bound ATP, resulting in the formation of a stable complex. GrpE releases ADP from DnaK; ATP binding to DnaK triggers the release of the substrate protein, thus completing the reaction cycle. Several rounds of ATP-dependent interactions between DnaJ, DnaK and GrpE are required for fully efficient folding. This is Protein GrpE from Bordetella petrii (strain ATCC BAA-461 / DSM 12804 / CCUG 43448).